A 129-amino-acid chain; its full sequence is Small ribosomal subunit protein uS11 (129 aa).

This sequence belongs to the universal ribosomal protein uS11 family. As to quaternary structure, part of the 30S ribosomal subunit. Interacts with proteins S7 and S18. Binds to IF-3.

Its function is as follows. Located on the platform of the 30S subunit, it bridges several disparate RNA helices of the 16S rRNA. Forms part of the Shine-Dalgarno cleft in the 70S ribosome. This Carboxydothermus hydrogenoformans (strain ATCC BAA-161 / DSM 6008 / Z-2901) protein is Small ribosomal subunit protein uS11.